A 449-amino-acid chain; its full sequence is Tubulin alpha-2B chain (449 aa).

Gln11 lines the GTP pocket. Lys40 bears the N6-acetyllysine mark. GTP contacts are provided by Glu71, Ser140, Gly144, Thr145, Thr179, Asn206, and Asn228. Glu71 is a Mg(2+) binding site. Residue Glu254 is part of the active site.

This sequence belongs to the tubulin family. As to quaternary structure, dimer of alpha and beta chains. A typical microtubule is a hollow water-filled tube with an outer diameter of 25 nm and an inner diameter of 15 nM. Alpha-beta heterodimers associate head-to-tail to form protofilaments running lengthwise along the microtubule wall with the beta-tubulin subunit facing the microtubule plus end conferring a structural polarity. Microtubules usually have 13 protofilaments but different protofilament numbers can be found in some organisms and specialized cells. Mg(2+) is required as a cofactor. In terms of processing, acetylation of alpha chains at Lys-40 stabilizes microtubules and affects affinity and processivity of microtubule motors. This modification has a role in multiple cellular functions, ranging from cell motility, cell cycle progression or cell differentiation to intracellular trafficking and signaling.

It localises to the cytoplasm. It is found in the cytoskeleton. The protein resides in the spindle. The protein localises to the nucleus. The catalysed reaction is GTP + H2O = GDP + phosphate + H(+). Its function is as follows. Tubulin is the major constituent of microtubules, a cylinder consisting of laterally associated linear protofilaments composed of alpha- and beta-tubulin heterodimers. Microtubules grow by the addition of GTP-tubulin dimers to the microtubule end, where a stabilizing cap forms. Below the cap, tubulin dimers are in GDP-bound state, owing to GTPase activity of alpha-tubulin. The polypeptide is Tubulin alpha-2B chain (ALTBE) (Physarum polycephalum (Slime mold)).